A 610-amino-acid polypeptide reads, in one-letter code: MKWLKHFQSLHTKLVIVYVLLIIIGMQIIGLYFTNSLEKELTQTFKNNISQYAKQIEINIEKVYDEDNAINAQKEVQNLLNEYANRQEIEEIRFIDKDQIIMATSKQSTRSLINQKANDNSIQKALSLGEINSHTVLKDYGNGKQRVWVYNLPVKTSNDGTIGDVYIEADINDVYNQLSNINQIFIVGTGISLLITVILGFFIARTITKPITDMRNQTVEMSKGNYTQRVKIYGNDEIGELALAFNNLSKRVQEAQANTESEKRRLDSVITHMSDGIIATDRRGRVRIVNDMALTMMGTMKEDIIGDHMLKVLKLEEDFSLDEIQENNDSFLLDINENEGIIARVNFSTIVQETGFVTGYIAVLHDVTEQQQVERERREFVANVSHELRTPLTSMNSYIEALESGAWKDGELAPQFLSVTREETERMIRLVNDLLQLSKMDNESEQITKEIVDFNMFINKIINRHEMSAKDTTFVREVPTETIFTEIDPDKMTQVFDNVITNAMKYSRGDKRVEFHVKQNALYNRMTIRVKDNGIGIPINKVDKIFDRFYRVDKARTRKMGGTGLGLAISKEIVEAHNGRIWANSVEGQGTSIFITLPCEVLEDGDWDAE.

2 helical membrane passes run 14–34 (LVIV…LYFT) and 184–204 (IFIV…FFIA). Positions 205-257 (RTITKPITDMRNQTVEMSKGNYTQRVKIYGNDEIGELALAFNNLSKRVQEAQA) constitute an HAMP domain. The PAS domain occupies 262 to 333 (EKRRLDSVIT…IQENNDSFLL (72 aa)). The PAC domain occupies 326-379 (ENNDSFLLDINENEGIIARVNFSTIVQETGFVTGYIAVLHDVTEQQQVERERRE). A Histidine kinase domain is found at 383–601 (NVSHELRTPL…SIFITLPCEV (219 aa)). Position 386 is a phosphohistidine; by autocatalysis (histidine 386).

Autophosphorylated.

It is found in the cell membrane. It catalyses the reaction ATP + protein L-histidine = ADP + protein N-phospho-L-histidine.. In terms of biological role, member of the two-component regulatory system WalK/WalR. WalK functions as a sensor protein kinase which is autophosphorylated at a histidine residue and transfers its phosphate group to WalR. This Staphylococcus saprophyticus subsp. saprophyticus (strain ATCC 15305 / DSM 20229 / NCIMB 8711 / NCTC 7292 / S-41) protein is Sensor protein kinase WalK (walK).